Here is a 145-residue protein sequence, read N- to C-terminus: D-aminoacyl-tRNA deacylase (145 aa).

Residues 137–138 carry the Gly-cisPro motif, important for rejection of L-amino acids motif; it reads GP.

Belongs to the DTD family. Homodimer.

Its subcellular location is the cytoplasm. The enzyme catalyses glycyl-tRNA(Ala) + H2O = tRNA(Ala) + glycine + H(+). It catalyses the reaction a D-aminoacyl-tRNA + H2O = a tRNA + a D-alpha-amino acid + H(+). Its function is as follows. An aminoacyl-tRNA editing enzyme that deacylates mischarged D-aminoacyl-tRNAs. Also deacylates mischarged glycyl-tRNA(Ala), protecting cells against glycine mischarging by AlaRS. Acts via tRNA-based rather than protein-based catalysis; rejects L-amino acids rather than detecting D-amino acids in the active site. By recycling D-aminoacyl-tRNA to D-amino acids and free tRNA molecules, this enzyme counteracts the toxicity associated with the formation of D-aminoacyl-tRNA entities in vivo and helps enforce protein L-homochirality. This Psychromonas ingrahamii (strain DSM 17664 / CCUG 51855 / 37) protein is D-aminoacyl-tRNA deacylase.